The sequence spans 505 residues: Nostrin (505 aa).

Positions 1-260 (MRDPLTDCSY…AISKIDIEKD (260 aa)) constitute an F-BAR domain. Coiled coils occupy residues 101-128 (AHQV…LVIS), 160-222 (ITTE…RIQL), and 295-332 (KERQ…AYSS). Position 114 is a phosphoserine (Ser-114). The REM-1 domain occupies 292 to 372 (AMSKERQTSS…SYKLSSVLAE (81 aa)). The SH3 domain occupies 437-496 (LGNGLCKALYPFQARQDDELDLEKGDIVTIHKKKDEGWWFGSLKGKKGHFPAAYVEELPL). At Ser-478 the chain carries Phosphoserine.

In terms of assembly, homotrimer. Interacts with DAB2. Interacts with NOS3, DNM2, WASL and CAV1. Interacts (via SH3 domain) with DNM2; this interaction allows the recruitment of NOS3 to dynamin-positive structures. As to expression, present in pulmonary arterial endothelial cells (at protein level).

The protein resides in the cell membrane. It localises to the cytoplasmic vesicle. The protein localises to the cytoplasm. It is found in the cytoskeleton. In terms of biological role, multivalent adapter protein which may decrease NOS3 activity by inducing its translocation away from the plasma membrane. The sequence is that of Nostrin from Bos taurus (Bovine).